The following is a 1624-amino-acid chain: NAD-specific glutamate dehydrogenase (1624 aa).

Residue Lys-845 is part of the active site.

It belongs to the Glu/Leu/Phe/Val dehydrogenases family. Interacts with (unphosphorylated) GarA.

The enzyme catalyses L-glutamate + NAD(+) + H2O = 2-oxoglutarate + NH4(+) + NADH + H(+). With respect to regulation, activity is inhibited by unphosphorylated GarA. Catalyzes the reversible conversion of L-glutamate to 2-oxoglutarate. This chain is NAD-specific glutamate dehydrogenase (gdh), found in Mycobacterium tuberculosis (strain ATCC 25618 / H37Rv).